The primary structure comprises 147 residues: Holdfast attachment protein A (147 aa).

Involved in attachment of the holdfast to the cell. The holdfast is a structure that allows the bacteria to firmly adheres to surfaces. The chain is Holdfast attachment protein A (hfaA) from Caulobacter vibrioides (strain ATCC 19089 / CIP 103742 / CB 15) (Caulobacter crescentus).